The following is a 291-amino-acid chain: Bifunctional protein FolD (291 aa).

Residues 165–167, serine 190, and isoleucine 231 each bind NADP(+); that span reads GRS.

This sequence belongs to the tetrahydrofolate dehydrogenase/cyclohydrolase family. In terms of assembly, homodimer.

It catalyses the reaction (6R)-5,10-methylene-5,6,7,8-tetrahydrofolate + NADP(+) = (6R)-5,10-methenyltetrahydrofolate + NADPH. The catalysed reaction is (6R)-5,10-methenyltetrahydrofolate + H2O = (6R)-10-formyltetrahydrofolate + H(+). The protein operates within one-carbon metabolism; tetrahydrofolate interconversion. Catalyzes the oxidation of 5,10-methylenetetrahydrofolate to 5,10-methenyltetrahydrofolate and then the hydrolysis of 5,10-methenyltetrahydrofolate to 10-formyltetrahydrofolate. This Azoarcus sp. (strain BH72) protein is Bifunctional protein FolD.